The primary structure comprises 400 residues: Enoyl-[acyl-carrier-protein] reductase [NADH] (400 aa).

NAD(+) is bound by residues 48 to 53, 74 to 75, 111 to 112, and 139 to 140; these read GSSSGY, FE, DA, and LA. Y225 contacts substrate. Residue Y235 is the Proton donor of the active site. NAD(+) contacts are provided by residues K244 and 273–275; that span reads VVT.

Belongs to the TER reductase family. Monomer.

It carries out the reaction a 2,3-saturated acyl-[ACP] + NAD(+) = a (2E)-enoyl-[ACP] + NADH + H(+). The protein operates within lipid metabolism; fatty acid biosynthesis. Its function is as follows. Involved in the final reduction of the elongation cycle of fatty acid synthesis (FAS II). Catalyzes the reduction of a carbon-carbon double bond in an enoyl moiety that is covalently linked to an acyl carrier protein (ACP). The protein is Enoyl-[acyl-carrier-protein] reductase [NADH] of Shewanella baltica (strain OS223).